A 450-amino-acid polypeptide reads, in one-letter code: Glucose-6-phosphate isomerase (450 aa).

Threonine 38 carries the post-translational modification Phosphothreonine. The active-site Proton donor is glutamate 290. Residues histidine 311 and lysine 425 contribute to the active site.

This sequence belongs to the GPI family.

It is found in the cytoplasm. The catalysed reaction is alpha-D-glucose 6-phosphate = beta-D-fructose 6-phosphate. It functions in the pathway carbohydrate biosynthesis; gluconeogenesis. It participates in carbohydrate degradation; glycolysis; D-glyceraldehyde 3-phosphate and glycerone phosphate from D-glucose: step 2/4. Functionally, catalyzes the reversible isomerization of glucose-6-phosphate to fructose-6-phosphate. This chain is Glucose-6-phosphate isomerase, found in Bacillus subtilis (strain 168).